A 461-amino-acid polypeptide reads, in one-letter code: tRNA modification GTPase MnmE (461 aa).

3 residues coordinate (6S)-5-formyl-5,6,7,8-tetrahydrofolate: R21, E87, and K126. Residues 222–384 (QSTVVLYGEP…LLELLKSKLT (163 aa)) form the TrmE-type G domain. N232 contacts K(+). GTP contacts are provided by residues 232 to 237 (NTGKSS), 251 to 257 (SDVPGTT), and 276 to 279 (DTAG). S236 contacts Mg(2+). Positions 251, 253, and 256 each coordinate K(+). T257 provides a ligand contact to Mg(2+). K461 is a (6S)-5-formyl-5,6,7,8-tetrahydrofolate binding site.

It belongs to the TRAFAC class TrmE-Era-EngA-EngB-Septin-like GTPase superfamily. TrmE GTPase family. In terms of assembly, homodimer. Heterotetramer of two MnmE and two MnmG subunits. K(+) is required as a cofactor.

Its subcellular location is the cytoplasm. Functionally, exhibits a very high intrinsic GTPase hydrolysis rate. Involved in the addition of a carboxymethylaminomethyl (cmnm) group at the wobble position (U34) of certain tRNAs, forming tRNA-cmnm(5)s(2)U34. This is tRNA modification GTPase MnmE from Leptospira biflexa serovar Patoc (strain Patoc 1 / Ames).